A 311-amino-acid chain; its full sequence is Methionyl-tRNA formyltransferase (311 aa).

110 to 113 (SLLP) provides a ligand contact to (6S)-5,6,7,8-tetrahydrofolate.

Belongs to the Fmt family.

It carries out the reaction L-methionyl-tRNA(fMet) + (6R)-10-formyltetrahydrofolate = N-formyl-L-methionyl-tRNA(fMet) + (6S)-5,6,7,8-tetrahydrofolate + H(+). In terms of biological role, attaches a formyl group to the free amino group of methionyl-tRNA(fMet). The formyl group appears to play a dual role in the initiator identity of N-formylmethionyl-tRNA by promoting its recognition by IF2 and preventing the misappropriation of this tRNA by the elongation apparatus. This chain is Methionyl-tRNA formyltransferase, found in Streptococcus pyogenes serotype M18 (strain MGAS8232).